Here is a 509-residue protein sequence, read N- to C-terminus: FAD-linked oxidoreductase dpmaF (509 aa).

Positions 1-21 are cleaved as a signal peptide; that stretch reads MTRLSLQLIAGLAGQAWLVNS. Residues 59–231 form the FAD-binding PCMH-type domain; sequence LQYEPIAVAV…AEYGFETFPA (173 aa). N-linked (GlcNAc...) asparagine glycans are attached at residues Asn125, Asn193, and Asn281.

The protein belongs to the oxygen-dependent FAD-linked oxidoreductase family. It depends on FAD as a cofactor.

The protein operates within secondary metabolite biosynthesis; terpenoid biosynthesis. Functionally, FAD-linked oxidoreductase; part of the gene cluster that mediates the biosynthesis of the diterpenoid pyrones subglutinols A and B. The first step of the pathway is the synthesis of the alpha-pyrone moiety by the polyketide synthase dpmaA via condensation of one acetyl-CoA starter unit with 3 malonyl-CoA units and 2 methylations. The alpha-pyrone is then combined with geranylgeranyl pyrophosphate (GGPP) formed by the GGPP synthase dpmaD through the action of the prenyltransferase dpmaC to yield a linear alpha-pyrone diterpenoid. Subsequent steps in the diterpenoid pyrone biosynthetic pathway involve the decalin core formation, which is initiated by the epoxidation of the C10-C11 olefin by the FAD-dependent oxidoreductase dpmaE, and is followed by a cyclization cascade catalyzed by the terpene cyclase dpmaB. The dehydrogenase dpmaF is then involved in tetrahydrofuran (THF) ring formation at the C5 unit to complete the formation of subglutinols A and B. The chain is FAD-linked oxidoreductase dpmaF from Metarhizium anisopliae (Entomophthora anisopliae).